The following is a 213-amino-acid chain: MKNQASSTVALIDYGAGNLRSVANALLASGLARENLVVTANPDEVLQADRVVLPGVGAFASCMQALKAIPDMVPALEKAVLEKGRPFLGICVGMQLLADQGEEYGVHQGLGWIKGKVTPLRPNDPSCKVPHMGWNQIGLTTDSHPLLRAGEAYFLHSYAFVPEDESTLLATTEHGGLVTAAVGRDNIMGVQFHPEKSQSYGLEFLSRFLDWNP.

The 206-residue stretch at Thr8–Pro213 folds into the Glutamine amidotransferase type-1 domain. Catalysis depends on Cys91, which acts as the Nucleophile. Active-site residues include His193 and Glu195.

As to quaternary structure, heterodimer of HisH and HisF.

The protein localises to the cytoplasm. It carries out the reaction 5-[(5-phospho-1-deoxy-D-ribulos-1-ylimino)methylamino]-1-(5-phospho-beta-D-ribosyl)imidazole-4-carboxamide + L-glutamine = D-erythro-1-(imidazol-4-yl)glycerol 3-phosphate + 5-amino-1-(5-phospho-beta-D-ribosyl)imidazole-4-carboxamide + L-glutamate + H(+). The enzyme catalyses L-glutamine + H2O = L-glutamate + NH4(+). It participates in amino-acid biosynthesis; L-histidine biosynthesis; L-histidine from 5-phospho-alpha-D-ribose 1-diphosphate: step 5/9. In terms of biological role, IGPS catalyzes the conversion of PRFAR and glutamine to IGP, AICAR and glutamate. The HisH subunit catalyzes the hydrolysis of glutamine to glutamate and ammonia as part of the synthesis of IGP and AICAR. The resulting ammonia molecule is channeled to the active site of HisF. The protein is Imidazole glycerol phosphate synthase subunit HisH of Zymomonas mobilis subsp. mobilis (strain ATCC 31821 / ZM4 / CP4).